We begin with the raw amino-acid sequence, 302 residues long: m7GpppN-mRNA hydrolase NUDT17 (302 aa).

The Nudix hydrolase domain occupies 89-237 (GRGVDLGVAV…DGTETPKHLP (149 aa)). Residues 128–149 (GHVEPDEELLDGGLRELWEESG) carry the Nudix box motif. 2 residues coordinate Mg(2+): E143 and E147.

It belongs to the Nudix hydrolase family. Mg(2+) is required as a cofactor. Requires Mn(2+) as cofactor.

It carries out the reaction a 5'-end (N(7)-methyl 5'-triphosphoguanosine)-ribonucleoside in mRNA + H2O = N(7)-methyl-GDP + a 5'-end phospho-ribonucleoside in mRNA + 2 H(+). In terms of biological role, acts as a decapping enzyme capable of hydrolyzing monomethylated capped RNAs (in vitro). Hydrolyzes monomethylated capped RNA after alpha and beta phosphates to form N(7)-methyl-GDP. Shows low activity towards unmethylated capped RNA. The polypeptide is m7GpppN-mRNA hydrolase NUDT17 (NUDT17) (Bos taurus (Bovine)).